Consider the following 437-residue polypeptide: GTPase Der (437 aa).

EngA-type G domains lie at 3-167 (NIVA…TKKV) and 176-352 (PAIA…DIRQ). GTP contacts are provided by residues 9–16 (GRPNVGKS), 56–60 (DTGGW), 119–122 (NKAD), 182–189 (GKPNVGKS), 229–233 (DTAGI), and 294–297 (NKWD). The KH-like domain maps to 353 to 437 (IKIPTSQLNR…TPINIFMREK (85 aa)).

Belongs to the TRAFAC class TrmE-Era-EngA-EngB-Septin-like GTPase superfamily. EngA (Der) GTPase family. As to quaternary structure, associates with the 50S ribosomal subunit.

In terms of biological role, GTPase that plays an essential role in the late steps of ribosome biogenesis. In Azobacteroides pseudotrichonymphae genomovar. CFP2, this protein is GTPase Der.